The sequence spans 223 residues: Deoxyribose-phosphate aldolase 2 (223 aa).

Catalysis depends on Asp92, which acts as the Proton donor/acceptor. Residue Lys154 is the Schiff-base intermediate with acetaldehyde of the active site. Residue Lys183 is the Proton donor/acceptor of the active site.

Belongs to the DeoC/FbaB aldolase family. DeoC type 1 subfamily.

It is found in the cytoplasm. It carries out the reaction 2-deoxy-D-ribose 5-phosphate = D-glyceraldehyde 3-phosphate + acetaldehyde. It functions in the pathway carbohydrate degradation; 2-deoxy-D-ribose 1-phosphate degradation; D-glyceraldehyde 3-phosphate and acetaldehyde from 2-deoxy-alpha-D-ribose 1-phosphate: step 2/2. Functionally, catalyzes a reversible aldol reaction between acetaldehyde and D-glyceraldehyde 3-phosphate to generate 2-deoxy-D-ribose 5-phosphate. In Oceanobacillus iheyensis (strain DSM 14371 / CIP 107618 / JCM 11309 / KCTC 3954 / HTE831), this protein is Deoxyribose-phosphate aldolase 2.